The primary structure comprises 611 residues: tRNA uridine 5-carboxymethylaminomethyl modification enzyme MnmG (611 aa).

14 to 19 (GAGHAG) provides a ligand contact to FAD. Residue 274-288 (GPRYCPSIEDKIVKF) coordinates NAD(+).

The protein belongs to the MnmG family. In terms of assembly, homodimer. Heterotetramer of two MnmE and two MnmG subunits. The cofactor is FAD.

The protein resides in the cytoplasm. Its function is as follows. NAD-binding protein involved in the addition of a carboxymethylaminomethyl (cmnm) group at the wobble position (U34) of certain tRNAs, forming tRNA-cmnm(5)s(2)U34. The protein is tRNA uridine 5-carboxymethylaminomethyl modification enzyme MnmG of Chlamydia caviae (strain ATCC VR-813 / DSM 19441 / 03DC25 / GPIC) (Chlamydophila caviae).